The chain runs to 33 residues: Mytimycin (33 aa).

It is found in the secreted. Functionally, has antifungal activity against N.crassa and F.culmorum. This is Mytimycin from Mytilus edulis (Blue mussel).